The chain runs to 546 residues: Elongator complex protein 3 (546 aa).

In terms of domain architecture, Radical SAM core spans 81-371; sequence RTASGIAVVA…YRVQRDIPMP (291 aa). The [4Fe-4S] cluster site is built by cysteine 98, cysteine 108, and cysteine 111. Acetyl-CoA-binding positions include lysine 163, 473–476, 496–498, and tyrosine 529; these read ELHV and FGM. The N-acetyltransferase domain maps to 395-546; sequence TQCRDVRTRE…EGPYMVKRLQ (152 aa).

It belongs to the ELP3 family. Component of the elongator complex. [4Fe-4S] cluster is required as a cofactor.

The protein localises to the cytoplasm. It is found in the nucleus. It catalyses the reaction uridine(34) in tRNA + acetyl-CoA + S-adenosyl-L-methionine + H2O = 5-(carboxymethyl)uridine(34) in tRNA + 5'-deoxyadenosine + L-methionine + CoA + 2 H(+). It functions in the pathway tRNA modification; 5-methoxycarbonylmethyl-2-thiouridine-tRNA biosynthesis. Its function is as follows. Catalytic tRNA acetyltransferase subunit of the elongator complex which is required for multiple tRNA modifications, including mcm5U (5-methoxycarbonylmethyl uridine), mcm5s2U (5-methoxycarbonylmethyl-2-thiouridine), and ncm5U (5-carbamoylmethyl uridine). In the elongator complex, acts as a tRNA uridine(34) acetyltransferase by mediating formation of carboxymethyluridine in the wobble base at position 34 in tRNAs. This Gallus gallus (Chicken) protein is Elongator complex protein 3.